The following is a 90-amino-acid chain: Kunitz-type serine protease inhibitor bitisilin-2 (90 aa).

A signal peptide spans 1-24 (MSSGGLLLLLGLLTLWAELTPVSG). The BPTI/Kunitz inhibitor domain maps to 31–81 (CYLPADTGPCMANFPRFYYDSASKKCKKFTYGGCHGNANNFETREECRKKC). 3 cysteine pairs are disulfide-bonded: Cys-31/Cys-81, Cys-40/Cys-64, and Cys-56/Cys-77.

This sequence belongs to the venom Kunitz-type family. Expressed by the venom gland.

The protein resides in the secreted. Serine protease inhibitor. The protein is Kunitz-type serine protease inhibitor bitisilin-2 of Bitis gabonica (Gaboon adder).